Here is a 124-residue protein sequence, read N- to C-terminus: Fluoride-specific ion channel FluC 1 (124 aa).

Helical transmembrane passes span 7–27, 32–52, 58–78, and 93–113; these read IQSKQLYKIFLLIVGSILGAI, LNNYFWVNISGAALLGLIVGL, IQFFLVIGFCGSFTTFSGWIL, and AGLICSNLLGGFTALSVTFWI. 2 residues coordinate Na(+): Gly-68 and Thr-71.

The protein belongs to the fluoride channel Fluc/FEX (TC 1.A.43) family.

Its subcellular location is the cell inner membrane. The catalysed reaction is fluoride(in) = fluoride(out). With respect to regulation, na(+) is not transported, but it plays an essential structural role and its presence is essential for fluoride channel function. In terms of biological role, fluoride-specific ion channel. Important for reducing fluoride concentration in the cell, thus reducing its toxicity. The chain is Fluoride-specific ion channel FluC 1 from Prochlorococcus marinus (strain SARG / CCMP1375 / SS120).